Consider the following 272-residue polypeptide: Alkaline ceramidase (272 aa).

2 helical membrane passes run 34–54 (FANT…IMLL) and 61–81 (VNGG…ASTY). H83 provides a ligand contact to Zn(2+). 4 helical membrane-spanning segments follow: residues 96–116 (LSLV…MKWF), 124–144 (LTLV…LCFL), 148–168 (LNAI…NYEG), and 183–203 (ILAL…LCDF). Zn(2+)-binding residues include H213 and H217. Residues 214–234 (ALFHLLAGLAGYTIFIMFSMI) form a helical membrane-spanning segment. N256 carries an N-linked (GlcNAc...) asparagine glycan.

This sequence belongs to the alkaline ceramidase family. The cofactor is Zn(2+).

Its subcellular location is the membrane. It carries out the reaction an N-acyl-sphingoid base + H2O = a sphingoid base + a fatty acid. It catalyses the reaction an N-acylsphing-4-enine + H2O = sphing-4-enine + a fatty acid. The catalysed reaction is an N-acyl-15-methylhexadecasphing-4-enine + H2O = 15-methylhexadecasphing-4-enine + a fatty acid. Its pathway is lipid metabolism; sphingolipid metabolism. In terms of biological role, hydrolyzes the sphingolipid ceramide into sphingoid base and free fatty acid. C.elegans contain specific sphingoid bases, which are unique or different in structure compared to the sphingoid bases found in other animals. Two examples of these distinctive compounds are: 15-methylhexadecasphinganine and 15-methylhexadecasphing-4-enine. The sequence is that of Alkaline ceramidase from Caenorhabditis elegans.